The chain runs to 422 residues: Serine hydroxymethyltransferase (422 aa).

Residues leucine 113 and 117-119 (GHL) each bind (6S)-5,6,7,8-tetrahydrofolate. Position 222 is an N6-(pyridoxal phosphate)lysine (lysine 222).

Belongs to the SHMT family. In terms of assembly, homodimer. The cofactor is pyridoxal 5'-phosphate.

Its subcellular location is the cytoplasm. The enzyme catalyses (6R)-5,10-methylene-5,6,7,8-tetrahydrofolate + glycine + H2O = (6S)-5,6,7,8-tetrahydrofolate + L-serine. The protein operates within one-carbon metabolism; tetrahydrofolate interconversion. It functions in the pathway amino-acid biosynthesis; glycine biosynthesis; glycine from L-serine: step 1/1. In terms of biological role, catalyzes the reversible interconversion of serine and glycine with tetrahydrofolate (THF) serving as the one-carbon carrier. This reaction serves as the major source of one-carbon groups required for the biosynthesis of purines, thymidylate, methionine, and other important biomolecules. Also exhibits THF-independent aldolase activity toward beta-hydroxyamino acids, producing glycine and aldehydes, via a retro-aldol mechanism. The protein is Serine hydroxymethyltransferase of Amoebophilus asiaticus (strain 5a2).